Reading from the N-terminus, the 133-residue chain is MANNIKLSILTPQKTFYVGDVKEIITRTVEGEIGILPNHTDLVAFLTPTETILVEEDGSRKKVFTSTGILNVGESEVSFMCDASEWPDEIDIQRAETAKERAEKRLKTSNNIDVKRAELSLSRALARIKTKND.

Belongs to the ATPase epsilon chain family. In terms of assembly, F-type ATPases have 2 components, CF(1) - the catalytic core - and CF(0) - the membrane proton channel. CF(1) has five subunits: alpha(3), beta(3), gamma(1), delta(1), epsilon(1). CF(0) has three main subunits: a, b and c.

The protein resides in the cell membrane. Functionally, produces ATP from ADP in the presence of a proton gradient across the membrane. The sequence is that of ATP synthase epsilon chain (atpC) from Clostridium acetobutylicum (strain ATCC 824 / DSM 792 / JCM 1419 / IAM 19013 / LMG 5710 / NBRC 13948 / NRRL B-527 / VKM B-1787 / 2291 / W).